A 2313-amino-acid polypeptide reads, in one-letter code: Histone-lysine N-methyltransferase Set2 (2313 aa).

Disordered regions lie at residues 1–115, 179–442, 550–858, 883–1106, 1118–1150, and 1163–1251; these read MEES…ASTS, AVGG…EETF, EPPL…LKAK, RLDE…KKAL, ETESSESTSSGSKMSRWDVQTSPELEAANPFGD, and KRDK…SQGR. Positions 17 to 29 form a DNA-binding region, a.T hook 1; that stretch reads GRGRGRPPKVALS. Over residues 73–82 the composition is skewed to basic and acidic residues; the sequence is IKFDVRDLLN. Residues 101-115 are compositionally biased toward low complexity; sequence STGHSQSGTTAASTS. Residues 197 to 209 constitute a DNA-binding region (a.T hook 2); sequence PRKRGRPRKSQLA. Over residues 221–241 the composition is skewed to low complexity; it reads SCSDSDTNSTSTTTSNMSSDS. Basic residues predominate over residues 252 to 265; it reads PKSKLRVSLKRLKL. The segment covering 266–288 has biased composition (low complexity); the sequence is GGRLESSDSGNSPSSSSPEVEPP. Residues 330–345 show a composition bias toward basic and acidic residues; the sequence is ESPKGEEEQEEGRPVE. Composition is skewed to acidic residues over residues 347 to 356, 365 to 375, and 388 to 398; these read EPQDLIDIDM, PDPEEDLDEIM, and ADDEAEEEEDA. Thr404 carries the post-translational modification Phosphothreonine. Low complexity predominate over residues 412-433; sequence ADSCSSAPRRSRRSAPLSGSSR. Residues 552-563 are compositionally biased toward basic and acidic residues; the sequence is PLKDESDPKQTE. The span at 659-671 shows a compositional bias: acidic residues; that stretch reads EDYESNQEQVAED. The segment covering 676–685 has biased composition (polar residues); the sequence is CNNQKGQKQT. 4 stretches are compositionally biased toward basic and acidic residues: residues 689–708, 719–732, 740–749, and 758–782; these read EMKEPEKPVAETVSKKEKAM, VDKKVRAGEMEKKV, VPEKKMDSKK, and KQKESGKSAKEAILKKETEKEKSSA. 2 positions are modified to phosphoserine: Ser786 and Ser788. 3 stretches are compositionally biased toward polar residues: residues 800-833, 918-928, and 938-955; these read AQWSPQLQTLPKSSTKPPQESAPSVISKTTSNQP, KSLSGKTSLRR, and LERNSSPSSDSAQANTSA. Residues 959 to 969 are compositionally biased toward basic residues; that stretch reads KPSKVKKKINP. Residues 997-1010 are compositionally biased toward low complexity; that stretch reads SSPVSTSSDSSSKR. A compositionally biased stretch (basic and acidic residues) spans 1016-1039; the sequence is TTSDLDGGSKLDQRRYTICEDRQP. Composition is skewed to low complexity over residues 1085–1097 and 1118–1127; these read SRQNSLDSSSSAS and ETESSESTSS. Residues 1163–1183 show a composition bias toward basic and acidic residues; it reads KRDKVDEDQRKEGQDEVKREA. Positions 1199 to 1213 are enriched in low complexity; that stretch reads TPATTPTPSPTQSNP. An AWS domain is found at 1307–1360; sequence NAEMQCDCFLTGDEEAQGHLSCGAGCINRMLMIECGPLCSNGARCTNKRFQQHQ. The Zn(2+) site is built by Cys1312, Cys1314, Cys1328, Cys1332, Cys1341, Cys1345, and Cys1351. The region spanning 1362–1479 is the SET domain; sequence WPCRVFRTEK…PGEEITFDYQ (118 aa). S-adenosyl-L-methionine is bound by residues 1415-1417 and 1440-1441; these read HYY and NH. Cys1443 serves as a coordination point for Zn(2+). Positions 1486-1502 constitute a Post-SET domain; it reads DAQRCYCEAANCRGWIG. Gln1488 is a binding site for S-adenosyl-L-methionine. Cys1490 contacts Zn(2+). Tyr1491 serves as a coordination point for S-adenosyl-L-methionine. Zn(2+) contacts are provided by Cys1492 and Cys1497. Disordered stretches follow at residues 1501–1598 and 1763–1860; these read IGGE…KPKV and MKEH…RRTL. The segment covering 1505–1534 has biased composition (acidic residues); that stretch reads PDSDEGEQLDEESDSDAEMDEEELEAEPEE. The span at 1539–1551 shows a compositional bias: basic residues; the sequence is KSAKAKAKSKLKA. Basic and acidic residues-rich tracts occupy residues 1564-1574, 1763-1774, and 1784-1806; these read QTKPKDREYKA, MKEHEREADRQQ, and EDQRERESSNDRFRQDRFRRDTT. The span at 1817–1832 shows a compositional bias: polar residues; the sequence is SGNNTICTITTQQKGS. Over residues 1840–1860 the composition is skewed to basic and acidic residues; it reads TRNDNRRRSDIGPPSEQRRTL. Positions 1963–1996 constitute a WW domain; that stretch reads DPLPPAWNWQVTSDGDIYYYNLRERISQWEPPSP. Residues Ser2130 and Ser2131 each carry the phosphoserine modification. The segment at 2177–2218 is disordered; the sequence is LGTVGKRKLPMPPSVTVKKHRQEQRSKKVKSSQSPLTATSAR. Positions 2193–2206 are enriched in basic residues; the sequence is VKKHRQEQRSKKVK. Over residues 2207–2216 the composition is skewed to polar residues; it reads SSQSPLTATS.

The protein belongs to the class V-like SAM-binding methyltransferase superfamily. Histone-lysine methyltransferase family. SET2 subfamily. In terms of assembly, interacts with (phosphorylated) Polr2A.

The protein resides in the nucleus. It is found in the chromosome. It catalyses the reaction L-lysyl(36)-[histone H3] + 3 S-adenosyl-L-methionine = N(6),N(6),N(6)-trimethyl-L-lysyl(36)-[histone H3] + 3 S-adenosyl-L-homocysteine + 3 H(+). Functionally, histone methyltransferase that specifically trimethylates 'Lys-36' of histone H3 (H3K36me3). Represents the main enzyme generating H3K36me3, a specific tag for epigenetic transcriptional activation. Involved in dosage compensation in males (X chromosome dosage compensation) by mediating formation of H3K36me3, a mark recognized by msl-3 component of the MSL complex. In addition to its role in dosage compensation in males, promotes germline stem cell differentiation in females: catalyzes formation of H3K36me3, promoting recruitment of msl-3 and subsequent recruitment of the ATAC complex, leading to transcription of genes, such as RpS19b. The polypeptide is Histone-lysine N-methyltransferase Set2 (Drosophila melanogaster (Fruit fly)).